A 193-amino-acid polypeptide reads, in one-letter code: UPF0215 protein PH0071 (193 aa).

It belongs to the UPF0215 family.

The sequence is that of UPF0215 protein PH0071 from Pyrococcus horikoshii (strain ATCC 700860 / DSM 12428 / JCM 9974 / NBRC 100139 / OT-3).